Here is a 328-residue protein sequence, read N- to C-terminus: MSLIKIDQKAYEYNLRHIAKKIGSFQRLICVFKDNAYGHGAKLLAPLAKNLGVSFVAVKSEEEAQEIEEFFENILILSHRPHGNENSRFIYALNDISQVKKYKQDIKIHLKIDTGMHRNGICVENLEHAIDLIRSSDLKLTGMFTHFASADEMDGSFFVQKENFQKAKKIVKKYFSNLLFHSHNSAALFRGKIPEDEYCRVGLVQFGYGDSNLKRVLSLYAHRLSQRILQKGQSIGYGGIFTAAKDMEVATYDLGYADGLFRYNGKGELVLGNGKVMLGKMSMDSFSCENSGEEICVFKDADIWADFFHTINYEILVKLNPNIQRVLV.

Lysine 33 acts as the Proton acceptor; specific for D-alanine in catalysis. Lysine 33 carries the post-translational modification N6-(pyridoxal phosphate)lysine. Arginine 118 is a binding site for substrate. The active-site Proton acceptor; specific for L-alanine is tyrosine 237. Residue methionine 283 coordinates substrate.

Belongs to the alanine racemase family. Requires pyridoxal 5'-phosphate as cofactor.

It catalyses the reaction L-alanine = D-alanine. Its pathway is amino-acid biosynthesis; D-alanine biosynthesis; D-alanine from L-alanine: step 1/1. Catalyzes the interconversion of L-alanine and D-alanine. May also act on other amino acids. The chain is Alanine racemase (alr) from Campylobacter jejuni subsp. jejuni serotype O:6 (strain 81116 / NCTC 11828).